The sequence spans 465 residues: Na(+)-translocating NADH-quinone reductase subunit A (465 aa).

Belongs to the NqrA family. As to quaternary structure, composed of six subunits; NqrA, NqrB, NqrC, NqrD, NqrE and NqrF.

The enzyme catalyses a ubiquinone + n Na(+)(in) + NADH + H(+) = a ubiquinol + n Na(+)(out) + NAD(+). Its function is as follows. NQR complex catalyzes the reduction of ubiquinone-1 to ubiquinol by two successive reactions, coupled with the transport of Na(+) ions from the cytoplasm to the periplasm. NqrA to NqrE are probably involved in the second step, the conversion of ubisemiquinone to ubiquinol. The chain is Na(+)-translocating NADH-quinone reductase subunit A from Chlamydia trachomatis serovar L2 (strain ATCC VR-902B / DSM 19102 / 434/Bu).